A 177-amino-acid polypeptide reads, in one-letter code: Large ribosomal subunit protein uL6 (177 aa).

This sequence belongs to the universal ribosomal protein uL6 family. In terms of assembly, part of the 50S ribosomal subunit.

Functionally, this protein binds to the 23S rRNA, and is important in its secondary structure. It is located near the subunit interface in the base of the L7/L12 stalk, and near the tRNA binding site of the peptidyltransferase center. The sequence is that of Large ribosomal subunit protein uL6 from Rhodopseudomonas palustris (strain BisB5).